The primary structure comprises 95 residues: Glutamyl-tRNA(Gln) amidotransferase subunit C (95 aa).

It belongs to the GatC family. As to quaternary structure, heterotrimer of A, B and C subunits.

It carries out the reaction L-glutamyl-tRNA(Gln) + L-glutamine + ATP + H2O = L-glutaminyl-tRNA(Gln) + L-glutamate + ADP + phosphate + H(+). It catalyses the reaction L-aspartyl-tRNA(Asn) + L-glutamine + ATP + H2O = L-asparaginyl-tRNA(Asn) + L-glutamate + ADP + phosphate + 2 H(+). Functionally, allows the formation of correctly charged Asn-tRNA(Asn) or Gln-tRNA(Gln) through the transamidation of misacylated Asp-tRNA(Asn) or Glu-tRNA(Gln) in organisms which lack either or both of asparaginyl-tRNA or glutaminyl-tRNA synthetases. The reaction takes place in the presence of glutamine and ATP through an activated phospho-Asp-tRNA(Asn) or phospho-Glu-tRNA(Gln). The polypeptide is Glutamyl-tRNA(Gln) amidotransferase subunit C (Mesorhizobium japonicum (strain LMG 29417 / CECT 9101 / MAFF 303099) (Mesorhizobium loti (strain MAFF 303099))).